We begin with the raw amino-acid sequence, 116 residues long: Large ribosomal subunit protein bL17 (116 aa).

Belongs to the bacterial ribosomal protein bL17 family. Part of the 50S ribosomal subunit. Contacts protein L32.

The protein is Large ribosomal subunit protein bL17 of Prochlorococcus marinus (strain MIT 9515).